A 448-amino-acid polypeptide reads, in one-letter code: uncharacterized protein (448 aa).

The uDENN domain occupies 4–155 (QAIVLATFDA…SAVNLEFDSL (152 aa)). Positions 183-326 (LDHLGPAFYC…FKGLSRYLSF (144 aa)) constitute a cDENN domain. In terms of domain architecture, dDENN spans 328 to 428 (GESSWGLTTY…WQYGKYFWLR (101 aa)). Residues 425–447 (FWLRRVSLIFLASTCFLFILWKL) form a helical membrane-spanning segment.

It is found in the golgi apparatus membrane. It localises to the endoplasmic reticulum membrane. This is an uncharacterized protein from Schizosaccharomyces pombe (strain 972 / ATCC 24843) (Fission yeast).